The sequence spans 209 residues: Urease accessory protein UreE (209 aa).

The segment covering 170-196 (EHHGHSHSHSHDHDHDHDHDHDHDHQH) has biased composition (basic and acidic residues). A disordered region spans residues 170–209 (EHHGHSHSHSHDHDHDHDHDHDHDHQHGPSCSHGHHHGHR).

It belongs to the UreE family.

Its subcellular location is the cytoplasm. Involved in urease metallocenter assembly. Binds nickel. Probably functions as a nickel donor during metallocenter assembly. The protein is Urease accessory protein UreE of Burkholderia mallei (strain NCTC 10247).